The chain runs to 238 residues: Ubiquinone/menaquinone biosynthesis C-methyltransferase UbiE (238 aa).

Positions 62 and 82 each coordinate S-adenosyl-L-methionine.

Belongs to the class I-like SAM-binding methyltransferase superfamily. MenG/UbiE family.

It carries out the reaction a 2-demethylmenaquinol + S-adenosyl-L-methionine = a menaquinol + S-adenosyl-L-homocysteine + H(+). The catalysed reaction is a 2-methoxy-6-(all-trans-polyprenyl)benzene-1,4-diol + S-adenosyl-L-methionine = a 5-methoxy-2-methyl-3-(all-trans-polyprenyl)benzene-1,4-diol + S-adenosyl-L-homocysteine + H(+). It participates in quinol/quinone metabolism; menaquinone biosynthesis; menaquinol from 1,4-dihydroxy-2-naphthoate: step 2/2. Its pathway is cofactor biosynthesis; ubiquinone biosynthesis. Its function is as follows. Methyltransferase required for the conversion of demethylmenaquinol (DMKH2) to menaquinol (MKH2) and the conversion of 2-polyprenyl-6-methoxy-1,4-benzoquinol (DDMQH2) to 2-polyprenyl-3-methyl-6-methoxy-1,4-benzoquinol (DMQH2). This is Ubiquinone/menaquinone biosynthesis C-methyltransferase UbiE from Wolbachia pipientis wMel.